Consider the following 166-residue polypeptide: Shikimate kinase (166 aa).

11 to 16 (GSGKST) provides a ligand contact to ATP. Position 15 (serine 15) interacts with Mg(2+). Substrate contacts are provided by aspartate 33, arginine 57, and glycine 79. Residue arginine 117 coordinates ATP. Arginine 134 serves as a coordination point for substrate.

It belongs to the shikimate kinase family. Monomer. The cofactor is Mg(2+).

The protein resides in the cytoplasm. It catalyses the reaction shikimate + ATP = 3-phosphoshikimate + ADP + H(+). Its pathway is metabolic intermediate biosynthesis; chorismate biosynthesis; chorismate from D-erythrose 4-phosphate and phosphoenolpyruvate: step 5/7. Functionally, catalyzes the specific phosphorylation of the 3-hydroxyl group of shikimic acid using ATP as a cosubstrate. This Sulfurihydrogenibium sp. (strain YO3AOP1) protein is Shikimate kinase.